The primary structure comprises 185 residues: UPF0301 protein Csal_0058 (185 aa).

The protein belongs to the UPF0301 (AlgH) family.

The protein is UPF0301 protein Csal_0058 of Chromohalobacter salexigens (strain ATCC BAA-138 / DSM 3043 / CIP 106854 / NCIMB 13768 / 1H11).